The following is a 428-amino-acid chain: Glutamate-1-semialdehyde 2,1-aminomutase (428 aa).

Lys-267 bears the N6-(pyridoxal phosphate)lysine mark.

This sequence belongs to the class-III pyridoxal-phosphate-dependent aminotransferase family. HemL subfamily. Homodimer. Pyridoxal 5'-phosphate is required as a cofactor.

The protein localises to the cytoplasm. The catalysed reaction is (S)-4-amino-5-oxopentanoate = 5-aminolevulinate. It participates in porphyrin-containing compound metabolism; protoporphyrin-IX biosynthesis; 5-aminolevulinate from L-glutamyl-tRNA(Glu): step 2/2. This is Glutamate-1-semialdehyde 2,1-aminomutase from Flavobacterium psychrophilum (strain ATCC 49511 / DSM 21280 / CIP 103535 / JIP02/86).